The primary structure comprises 394 residues: Elongation factor Tu (394 aa).

The tr-type G domain occupies 10-204 (RTHINVGTIG…ILDNYIPEPK (195 aa)). Residues 19–26 (GHVDHGKT) are G1. 19–26 (GHVDHGKT) contributes to the GTP binding site. Threonine 26 lines the Mg(2+) pocket. A G2 region spans residues 60–64 (GITIN). Residues 81–84 (DCPG) are G3. Residues 81 to 85 (DCPGH) and 136 to 139 (NKCD) contribute to the GTP site. Positions 136–139 (NKCD) are G4. The segment at 174 to 176 (SAL) is G5.

The protein belongs to the TRAFAC class translation factor GTPase superfamily. Classic translation factor GTPase family. EF-Tu/EF-1A subfamily. Monomer.

Its subcellular location is the cytoplasm. It carries out the reaction GTP + H2O = GDP + phosphate + H(+). Its function is as follows. GTP hydrolase that promotes the GTP-dependent binding of aminoacyl-tRNA to the A-site of ribosomes during protein biosynthesis. The protein is Elongation factor Tu of Blochmanniella floridana.